The primary structure comprises 247 residues: UPF0280 protein MMP1236 (247 aa).

Belongs to the UPF0280 family.

This chain is UPF0280 protein MMP1236, found in Methanococcus maripaludis (strain DSM 14266 / JCM 13030 / NBRC 101832 / S2 / LL).